The primary structure comprises 120 residues: Ribosome-binding factor A (120 aa).

It belongs to the RbfA family. In terms of assembly, monomer. Binds 30S ribosomal subunits, but not 50S ribosomal subunits or 70S ribosomes.

The protein resides in the cytoplasm. In terms of biological role, one of several proteins that assist in the late maturation steps of the functional core of the 30S ribosomal subunit. Associates with free 30S ribosomal subunits (but not with 30S subunits that are part of 70S ribosomes or polysomes). Required for efficient processing of 16S rRNA. May interact with the 5'-terminal helix region of 16S rRNA. In Verminephrobacter eiseniae (strain EF01-2), this protein is Ribosome-binding factor A.